We begin with the raw amino-acid sequence, 386 residues long: Synaptotagmin-5 (386 aa).

The span at 1–16 (MFPEPPTPGPPSPDTP) shows a compositional bias: pro residues. The tract at residues 1–23 (MFPEPPTPGPPSPDTPPDSSRIS) is disordered. Residues 1–24 (MFPEPPTPGPPSPDTPPDSSRISH) are Vesicular-facing. Residues 25–45 (GPVPPWALATIVLVSGLLIFS) form a helical membrane-spanning segment. The Cytoplasmic portion of the chain corresponds to 46–386 (CCFCLYRKSC…PDRVRLLPAP (341 aa)). 2 C2 domains span residues 108 to 227 (ELGR…QAWR) and 239 to 372 (KLGD…AQWH). Positions 138, 139, 145, 197, 198, 199, 202, 205, 270, 276, 330, and 332 each coordinate Ca(2+).

It belongs to the synaptotagmin family. As to quaternary structure, homodimer. Interacts with both alpha- and beta-tubulin. The cofactor is Ca(2+).

Its subcellular location is the cytoplasmic vesicle. The protein localises to the secretory vesicle. It localises to the synaptic vesicle membrane. The protein resides in the recycling endosome membrane. Its function is as follows. May be involved in Ca(2+)-dependent exocytosis of secretory vesicles through Ca(2+) and phospholipid binding to the C2 domain or may serve as Ca(2+) sensors in the process of vesicular trafficking and exocytosis. Regulates the Ca(2+)-dependent secretion of norepinephrine in PC12 cells. Required for export from the endocytic recycling compartment to the cell surface. The sequence is that of Synaptotagmin-5 (SYT5) from Homo sapiens (Human).